Here is a 205-residue protein sequence, read N- to C-terminus: Transcriptional regulator GfcR (205 aa).

This sequence belongs to the purine/pyrimidine phosphoribosyltransferase family. GfcR subfamily.

The polypeptide is Transcriptional regulator GfcR (Methanococcus maripaludis (strain C7 / ATCC BAA-1331)).